Reading from the N-terminus, the 114-residue chain is Probable 4-amino-4-deoxy-L-arabinose-phosphoundecaprenol flippase subunit ArnE (114 aa).

3 helical membrane-spanning segments follow: residues 38 to 58, 64 to 84, and 94 to 114; these read LTLR…LLWL, LPLS…TLAA, and LRHW…SWHL. The region spanning 43 to 112 is the EamA domain; it reads LAIAVVSLGL…IMFGILLMSW (70 aa).

The protein belongs to the ArnE family. In terms of assembly, heterodimer of ArnE and ArnF.

The protein localises to the cell inner membrane. It participates in bacterial outer membrane biogenesis; lipopolysaccharide biosynthesis. In terms of biological role, translocates 4-amino-4-deoxy-L-arabinose-phosphoundecaprenol (alpha-L-Ara4N-phosphoundecaprenol) from the cytoplasmic to the periplasmic side of the inner membrane. The chain is Probable 4-amino-4-deoxy-L-arabinose-phosphoundecaprenol flippase subunit ArnE from Yersinia pseudotuberculosis serotype O:3 (strain YPIII).